The primary structure comprises 316 residues: Cell division protein FtsQ (316 aa).

The disordered stretch occupies residues 1–34; that stretch reads MAKAARRTKSAPARRSPRRHARQTGATIRRPKRP. The Cytoplasmic segment spans residues 1-61; sequence MAKAARRTKS…HPLLKQMAKR (61 aa). The helical transmembrane segment at 62 to 80 threads the bilayer; it reads LLLILVIVGFLAGLWAARW. Residues 81–316 are Periplasmic-facing; the sequence is PQLLATKTGE…AADPLVSDRI (236 aa). The POTRA domain occupies 97–165; the sequence is FSVRHVEIVG…DTLVVDIVER (69 aa). Residues 295-316 form a disordered region; sequence PEPVKKATKPAKAADPLVSDRI.

The protein belongs to the FtsQ/DivIB family. FtsQ subfamily.

It is found in the cell inner membrane. In terms of biological role, essential cell division protein. This chain is Cell division protein FtsQ, found in Zymomonas mobilis subsp. mobilis (strain ATCC 31821 / ZM4 / CP4).